Consider the following 644-residue polypeptide: Far upstream element-binding protein 1 (644 aa).

Disordered regions lie at residues 1–31 and 44–94; these read MADY…NDAF and KIGG…PMHQ. The residue at position 2 (alanine 2) is an N-acetylalanine. The segment covering 14-27 has biased composition (gly residues); sequence SAGGGGGGGGGGGV. Phosphoserine occurs at positions 52 and 55. Positions 65–77 are enriched in basic and acidic residues; that stretch reads RPLEDGDQPDAKK. Residues 81-94 show a composition bias toward polar residues; it reads QNDSFGTQLPPMHQ. 3 consecutive KH domains span residues 100–164, 185–251, and 275–339; these read VMTE…KRLL, NAVQ…KEMV, and NEGI…AEII. Serine 140 is modified (phosphoserine). At threonine 153 the chain carries Phosphothreonine. Residues arginine 321, arginine 359, arginine 361, and arginine 363 each carry the omega-N-methylarginine modification. A disordered region spans residues 346-365; it reads VQAGNPGGPGPGGRGRGRGQ. The span at 350 to 365 shows a compositional bias: gly residues; the sequence is NPGGPGPGGRGRGRGQ. Residues 376-443 enclose the KH 4 domain; the sequence is LQEFNFIVPT…QQIDYARQLI (68 aa). Threonine 432 carries the phosphothreonine modification. Disordered stretches follow at residues 447–532 and 548–580; these read IGGP…GTDP and QAQP…AGQV. Over residues 468-505 the composition is skewed to pro residues; that stretch reads PHGPPGPPGPGTPMGPYNPAPYNPGPPGPAPHGPPAPY. A compositionally biased stretch (low complexity) spans 556–573; the sequence is PAGAPTTTQTNGQGDQQN. Residue serine 630 is modified to Phosphoserine.

In terms of assembly, found in a complex with PUF60 and far upstream element (FUSE) DNA segment. Interacts with PUF60 and JTV1. In terms of processing, ubiquitinated. This targets the protein for proteasome-mediated degradation.

Its subcellular location is the nucleus. Regulates MYC expression by binding to a single-stranded far-upstream element (FUSE) upstream of the MYC promoter. May act both as activator and repressor of transcription. The chain is Far upstream element-binding protein 1 (FUBP1) from Homo sapiens (Human).